A 344-amino-acid chain; its full sequence is MFVDSASFSVSSGKGGPGCASFRREKHVPLGGPDGGDGGNGGDVYFIVDNNTHTLANYKGKRAMKAANGVPGLPRNMTGKKGDNLELIVPPGTAVYDADSNELLLDLISEGQKELFLSGGKGGLGNVHFKTSVNQAPTKAQPGLPGETRNIRLELKLIADVGLVGFPNVGKSTLISSISNAKPQIANYEFTTLTPKLGLVEVDEFSGFIMADIPGIIEGASDGKGLGIQFLKHIERTKVLLYMIDLANYRSLKEQFETLKSEVLKFSPNLAKRDFAIALTRLDAAVDADEKIEEFLNEFKFDKKQDIYEYDRQKPFFVLPISSVAGDGLKELKFGLLEILKGEN.

Positions 1 to 12 (MFVDSASFSVSS) are enriched in polar residues. Residues 1–36 (MFVDSASFSVSSGKGGPGCASFRREKHVPLGGPDGG) are disordered. In terms of domain architecture, Obg spans 1-158 (MFVDSASFSV…RNIRLELKLI (158 aa)). In terms of domain architecture, OBG-type G spans 159 to 341 (ADVGLVGFPN…LKFGLLEILK (183 aa)). Residues 165–172 (GFPNVGKS), 190–194 (FTTLT), 212–215 (DIPG), 280–283 (TRLD), and 322–324 (SSV) contribute to the GTP site. Residues Ser172 and Thr192 each coordinate Mg(2+).

This sequence belongs to the TRAFAC class OBG-HflX-like GTPase superfamily. OBG GTPase family. As to quaternary structure, monomer. Mg(2+) serves as cofactor.

The protein localises to the cytoplasm. An essential GTPase which binds GTP, GDP and possibly (p)ppGpp with moderate affinity, with high nucleotide exchange rates and a fairly low GTP hydrolysis rate. Plays a role in control of the cell cycle, stress response, ribosome biogenesis and in those bacteria that undergo differentiation, in morphogenesis control. This is GTPase Obg from Campylobacter fetus subsp. fetus (strain 82-40).